We begin with the raw amino-acid sequence, 403 residues long: Tryptophan synthase beta chain (403 aa).

Lys-87 carries the post-translational modification N6-(pyridoxal phosphate)lysine.

This sequence belongs to the TrpB family. Tetramer of two alpha and two beta chains. The cofactor is pyridoxal 5'-phosphate.

The catalysed reaction is (1S,2R)-1-C-(indol-3-yl)glycerol 3-phosphate + L-serine = D-glyceraldehyde 3-phosphate + L-tryptophan + H2O. The protein operates within amino-acid biosynthesis; L-tryptophan biosynthesis; L-tryptophan from chorismate: step 5/5. Its function is as follows. The beta subunit is responsible for the synthesis of L-tryptophan from indole and L-serine. This Shewanella loihica (strain ATCC BAA-1088 / PV-4) protein is Tryptophan synthase beta chain.